Consider the following 165-residue polypeptide: Large ribosomal subunit protein uL10 (165 aa).

It belongs to the universal ribosomal protein uL10 family. As to quaternary structure, part of the ribosomal stalk of the 50S ribosomal subunit. The N-terminus interacts with L11 and the large rRNA to form the base of the stalk. The C-terminus forms an elongated spine to which L12 dimers bind in a sequential fashion forming a multimeric L10(L12)X complex.

Functionally, forms part of the ribosomal stalk, playing a central role in the interaction of the ribosome with GTP-bound translation factors. This is Large ribosomal subunit protein uL10 from Shewanella halifaxensis (strain HAW-EB4).